We begin with the raw amino-acid sequence, 209 residues long: ATP synthase subunit b', chloroplastic (209 aa).

Residues 1–62 (MASLLARPQQ…NALMAMPAAA (62 aa)) constitute a chloroplast transit peptide. The helical transmembrane segment at 67-87 (IFDFNLTLPVMAGEFLLLMVF) threads the bilayer.

This sequence belongs to the ATPase B chain family. In terms of assembly, F-type ATPases have 2 components, F(1) - the catalytic core - and F(0) - the membrane proton channel. F(1) has five subunits: alpha(3), beta(3), gamma(1), delta(1), epsilon(1). F(0) has four main subunits: a(1), b(1), b'(1) and c(10-14). The alpha and beta chains form an alternating ring which encloses part of the gamma chain. F(1) is attached to F(0) by a central stalk formed by the gamma and epsilon chains, while a peripheral stalk is formed by the delta, b and b' chains.

The protein resides in the plastid. It is found in the chloroplast thylakoid membrane. F(1)F(0) ATP synthase produces ATP from ADP in the presence of a proton or sodium gradient. F-type ATPases consist of two structural domains, F(1) containing the extramembraneous catalytic core and F(0) containing the membrane proton channel, linked together by a central stalk and a peripheral stalk. During catalysis, ATP synthesis in the catalytic domain of F(1) is coupled via a rotary mechanism of the central stalk subunits to proton translocation. Functionally, component of the F(0) channel, it forms part of the peripheral stalk, linking F(1) to F(0). The b'-subunit is a diverged and duplicated form of b found in plants and photosynthetic bacteria. In Chlamydomonas reinhardtii (Chlamydomonas smithii), this protein is ATP synthase subunit b', chloroplastic.